Consider the following 304-residue polypeptide: Putative S-adenosyl-L-methionine-dependent methyltransferase MSMEG_1481/MSMEI_1445 (304 aa).

Residues aspartate 127 and 156 to 157 (DL) each bind S-adenosyl-L-methionine.

Belongs to the UPF0677 family.

Its function is as follows. Exhibits S-adenosyl-L-methionine-dependent methyltransferase activity. This is Putative S-adenosyl-L-methionine-dependent methyltransferase MSMEG_1481/MSMEI_1445 from Mycolicibacterium smegmatis (strain ATCC 700084 / mc(2)155) (Mycobacterium smegmatis).